A 284-amino-acid polypeptide reads, in one-letter code: 4-diphosphocytidyl-2-C-methyl-D-erythritol kinase (284 aa).

Residue Lys-14 is part of the active site. 98–108 (PMGGGLGGGSS) lines the ATP pocket. The active site involves Asp-140.

The protein belongs to the GHMP kinase family. IspE subfamily.

It catalyses the reaction 4-CDP-2-C-methyl-D-erythritol + ATP = 4-CDP-2-C-methyl-D-erythritol 2-phosphate + ADP + H(+). Its pathway is isoprenoid biosynthesis; isopentenyl diphosphate biosynthesis via DXP pathway; isopentenyl diphosphate from 1-deoxy-D-xylulose 5-phosphate: step 3/6. In terms of biological role, catalyzes the phosphorylation of the position 2 hydroxy group of 4-diphosphocytidyl-2C-methyl-D-erythritol. The chain is 4-diphosphocytidyl-2-C-methyl-D-erythritol kinase from Shewanella sp. (strain MR-4).